We begin with the raw amino-acid sequence, 536 residues long: MTEKGADGADGLTKAKSNAVSEDYETVNHVTGLKLAVIVTGLCLSVLLVALDNTIIATAIPKITDQFHALEDIGWYGSSYLLTICAFQLIFGKIYTFFPVKWVFLIAITIFEIGSAICGAAPNSTALIIGRAVAGIGSAGIFSGALIIIAYSIPLEKRPAYTGAIGGMYGIASVAGPLMGGAFTDHISWRWCFYINLPIGAVTILSILIFLKHPKQKLDNNQTWKARLLKLDPIGTAFFMPSIICLLLALQWGGTKYPWNNGRIIALFVVFAVLISGFIYFQIRGGDSATVPPRILKKRSIASGAFFLFTIGSAFFIMVYYLPIWFQAIKGASATSSGIMNIPMVLSLVVLSIASGITVTAIGYYAPLYYVSTVLTSIGAGLLTTFTTETSKGKWIGYQIIFGAGVGTGLQLSIIAAQAVLPLEDVAVGTVIMMFCQTLGGALFVSVGQNVFTNLLVKGVVNAAPGLDPQVVLRVGATQLKNMIPPQFLDGVQVAYNDALTKTWYVATALAALSVIGSVGMEWKSVKGKKIEPAAA.

3 consecutive transmembrane segments (helical) span residues 30–50 (VTGL…LLVA), 80–100 (YLLT…FFPV), and 102–122 (WVFL…GAAP). A glycan (N-linked (GlcNAc...) asparagine) is linked at asparagine 123. The next 3 membrane-spanning stretches (helical) occupy residues 133–153 (VAGI…AYSI), 163–183 (GAIG…GGAF), and 191–211 (WCFY…LIFL). Asparagine 221 is a glycosylation site (N-linked (GlcNAc...) asparagine). The next 8 membrane-spanning stretches (helical) occupy residues 234–254 (IGTA…QWGG), 264–284 (IIAL…FQIR), 306–326 (FFLF…PIWF), 342–362 (IPMV…VTAI), 366–386 (APLY…LTTF), 400–420 (IIFG…AQAV), 426–446 (VAVG…LFVS), and 503–523 (TWYV…GMEW).

Belongs to the major facilitator superfamily. TCR/Tet family.

It is found in the cell membrane. In terms of biological role, MFS-type efflux pump involved in the modulation susceptibility to azoles, including fluconazole, itraconazole, ketoconazole, miconazole and voriconazole. Confers also increased resistance chloramphenicol and thiamphenicol, suggesting that it acts as a pleiotropic drug transporter with a broad substrate spectrum. Finally, increases the tolerance to cycloheximide when expressed in S.cerevisiae, but not in dermatophyte species. The polypeptide is MFS-type efflux pump MFS1 (Trichophyton rubrum (strain ATCC MYA-4607 / CBS 118892) (Athlete's foot fungus)).